Consider the following 297-residue polypeptide: Flavin-dependent thymidylate synthase (297 aa).

A ThyX domain is found at 41 to 251 (GFVRLVDYMG…PLTYAAFVEY (211 aa)). FAD contacts are provided by residues threonine 87, 110-112 (RHR), and glutamate 118. DUMP contacts are provided by residues 107-110 (QWVR), 118-122 (EYSAR), and arginine 190. The ThyX motif signature appears at 110–120 (RHRTANVNEYS). FAD is bound by residues 206 to 208 (DLH) and histidine 212. DUMP is bound at residue arginine 217. Residue arginine 217 is the Involved in ionization of N3 of dUMP, leading to its activation of the active site.

Belongs to the thymidylate synthase ThyX family. Homotetramer. It depends on FAD as a cofactor.

It carries out the reaction dUMP + (6R)-5,10-methylene-5,6,7,8-tetrahydrofolate + NADPH + H(+) = dTMP + (6S)-5,6,7,8-tetrahydrofolate + NADP(+). It functions in the pathway pyrimidine metabolism; dTTP biosynthesis. Functionally, catalyzes the reductive methylation of 2'-deoxyuridine-5'-monophosphate (dUMP) to 2'-deoxythymidine-5'-monophosphate (dTMP) while utilizing 5,10-methylenetetrahydrofolate (mTHF) as the methyl donor, and NADPH and FADH(2) as the reductant. This is Flavin-dependent thymidylate synthase from Ehrlichia ruminantium (strain Gardel).